We begin with the raw amino-acid sequence, 552 residues long: Putative transport protein YPN_3727 (552 aa).

The next 6 membrane-spanning stretches (helical) occupy residues 1–21 (MSAI…GLWI), 26–46 (IYGV…VGHF), 65–85 (FGLI…FFSS), 96–116 (FAIL…KLFA), 119–139 (LPII…LGAA), and 158–178 (MGYA…MWLI). RCK C-terminal domains follow at residues 192–276 (AFDS…VVGE) and 279–361 (DVTL…IVGN). A run of 6 helical transmembrane segments spans residues 371 to 391 (MLPV…PLFV), 393 to 413 (GFPA…ALIL), 439 to 459 (IVLF…NTLV), 464 to 484 (LAWI…VGIL), 493 to 513 (YLTL…LAFA), and 530 to 550 (VYPL…VLFW).

This sequence belongs to the AAE transporter (TC 2.A.81) family. YidE subfamily.

The protein resides in the cell membrane. The sequence is that of Putative transport protein YPN_3727 from Yersinia pestis bv. Antiqua (strain Nepal516).